Consider the following 1405-residue polypeptide: DNA-directed RNA polymerase subunit beta' (1405 aa).

Positions 70, 72, 85, and 88 each coordinate Zn(2+). Aspartate 460, aspartate 462, and aspartate 464 together coordinate Mg(2+). Zn(2+) contacts are provided by cysteine 814, cysteine 888, cysteine 895, and cysteine 898.

The protein belongs to the RNA polymerase beta' chain family. The RNAP catalytic core consists of 2 alpha, 1 beta, 1 beta' and 1 omega subunit. When a sigma factor is associated with the core the holoenzyme is formed, which can initiate transcription. Mg(2+) serves as cofactor. Zn(2+) is required as a cofactor.

The enzyme catalyses RNA(n) + a ribonucleoside 5'-triphosphate = RNA(n+1) + diphosphate. In terms of biological role, DNA-dependent RNA polymerase catalyzes the transcription of DNA into RNA using the four ribonucleoside triphosphates as substrates. In Shewanella putrefaciens (strain CN-32 / ATCC BAA-453), this protein is DNA-directed RNA polymerase subunit beta'.